Here is a 191-residue protein sequence, read N- to C-terminus: Adenylate kinase (191 aa).

Position 10 to 15 (10 to 15 (GAGKGT)) interacts with ATP. The tract at residues 30–59 (STGDMLRAARTSGTEMGNLVAGVMDRGELV) is NMP. AMP is bound by residues Thr-31, Arg-36, 57–59 (ELV), 83–86 (GFPR), and Gln-90. The interval 124–140 (NRAKEAAAAGQPVRADD) is LID. Residue Arg-125 participates in ATP binding. 2 residues coordinate AMP: Arg-137 and Arg-148. Gly-176 is an ATP binding site.

Belongs to the adenylate kinase family. As to quaternary structure, monomer.

Its subcellular location is the cytoplasm. It catalyses the reaction AMP + ATP = 2 ADP. Its pathway is purine metabolism; AMP biosynthesis via salvage pathway; AMP from ADP: step 1/1. In terms of biological role, catalyzes the reversible transfer of the terminal phosphate group between ATP and AMP. Plays an important role in cellular energy homeostasis and in adenine nucleotide metabolism. The protein is Adenylate kinase of Jannaschia sp. (strain CCS1).